The following is a 241-amino-acid chain: DnaA regulatory inactivator Hda (241 aa).

The protein belongs to the DnaA family. HdA subfamily. The active form seems to be an ADP-bound monomer. Forms the RIDA complex (regulatory inactivation of DnaA) of ATP-DnaA, ADP-Hda and the DNA-loaded beta sliding clamp (dnaN).

In terms of biological role, mediates the interaction of DNA replication initiator protein DnaA with DNA polymerase subunit beta sliding clamp (dnaN). Stimulates hydrolysis of ATP-DnaA to ADP-DnaA, rendering DnaA inactive for reinitiation, a process called regulatory inhibition of DnaA or RIDA. This is DnaA regulatory inactivator Hda from Citrobacter koseri (strain ATCC BAA-895 / CDC 4225-83 / SGSC4696).